Here is a 577-residue protein sequence, read N- to C-terminus: Isocitrate dehydrogenase kinase/phosphatase (577 aa).

ATP contacts are provided by residues 318-324 (APGVRGM) and Lys-339. Asp-374 is a catalytic residue.

Belongs to the AceK family.

The protein resides in the cytoplasm. The catalysed reaction is L-seryl-[isocitrate dehydrogenase] + ATP = O-phospho-L-seryl-[isocitrate dehydrogenase] + ADP + H(+). Its function is as follows. Bifunctional enzyme which can phosphorylate or dephosphorylate isocitrate dehydrogenase (IDH) on a specific serine residue. This is a regulatory mechanism which enables bacteria to bypass the Krebs cycle via the glyoxylate shunt in response to the source of carbon. When bacteria are grown on glucose, IDH is fully active and unphosphorylated, but when grown on acetate or ethanol, the activity of IDH declines drastically concomitant with its phosphorylation. The chain is Isocitrate dehydrogenase kinase/phosphatase from Pseudomonas aeruginosa (strain LESB58).